A 536-amino-acid polypeptide reads, in one-letter code: Butyrophilin-like protein 9 (536 aa).

Residues Met-1–Ser-35 form the signal peptide. Ig-like V-type domains are found at residues Asp-36–Glu-149 and Gly-152–Val-241. Residues Asp-36–Lys-257 lie on the Extracellular side of the membrane. Cys-59 and Cys-133 are joined by a disulfide. N-linked (GlcNAc...) asparagine glycans are attached at residues Asn-102, Asn-139, and Asn-224. Cysteines 173 and 227 form a disulfide. A helical transmembrane segment spans residues Ala-258 to Leu-278. Over Arg-279–Ser-536 the chain is Cytoplasmic. The B30.2/SPRY domain maps to Asp-307–Gly-506.

This sequence belongs to the immunoglobulin superfamily. BTN/MOG family.

It is found in the membrane. This chain is Butyrophilin-like protein 9 (Btnl9), found in Mus musculus (Mouse).